We begin with the raw amino-acid sequence, 948 residues long: UvrABC system protein A (948 aa).

33 to 40 provides a ligand contact to ATP; it reads GLSGSGKS. The C4-type zinc finger occupies 252 to 279; sequence CPICGFSIGELEPRMFSFNSPFGACPTC. 2 ABC transporter domains span residues 309–587 and 607–935; these read WIPT…KKSL and ASDR…KYLK. 639–646 provides a ligand contact to ATP; sequence GVSGSGKS. A C4-type zinc finger spans residues 738–764; the sequence is CEACKGDGIIKIEMHFLPDVYVPCEVC.

Belongs to the ABC transporter superfamily. UvrA family. In terms of assembly, forms a heterotetramer with UvrB during the search for lesions.

The protein resides in the cytoplasm. In terms of biological role, the UvrABC repair system catalyzes the recognition and processing of DNA lesions. UvrA is an ATPase and a DNA-binding protein. A damage recognition complex composed of 2 UvrA and 2 UvrB subunits scans DNA for abnormalities. When the presence of a lesion has been verified by UvrB, the UvrA molecules dissociate. The protein is UvrABC system protein A of Staphylococcus aureus (strain MRSA252).